Consider the following 674-residue polypeptide: ATP-citrate synthase subunit 1 (674 aa).

The segment covering Met1–Ala10 has biased composition (low complexity). Residues Met1–Gly26 are disordered. ATP contacts are provided by residues Leu261–Gly281 and Phe312–Ser338. Glu278 lines the Mg(2+) pocket. The active-site Tele-phosphohistidine intermediate is His320. Met339–Thr349 lines the CoA pocket.

Belongs to the succinate/malate CoA ligase alpha subunit family. As to quaternary structure, composed of two subunits.

It is found in the cytoplasm. It carries out the reaction oxaloacetate + acetyl-CoA + ADP + phosphate = citrate + ATP + CoA. Functionally, catalyzes the formation of cytosolic acetyl-CoA, which is mainly used for the biosynthesis of fatty acids and sterols. The protein is ATP-citrate synthase subunit 1 (ACL1) of Sordaria macrospora (strain ATCC MYA-333 / DSM 997 / K(L3346) / K-hell).